Here is a 235-residue protein sequence, read N- to C-terminus: Class B acid phosphatase (235 aa).

A signal peptide spans 1-22 (MKNLVKLSLIAMLTAATLPAMA). Catalysis depends on Asp-67, which acts as the Nucleophile. Mg(2+) contacts are provided by Asp-67 and Asp-69. Asp-69 serves as the catalytic Proton donor. Substrate contacts are provided by residues 135–136 (TG) and Lys-175. Asp-190 contributes to the Mg(2+) binding site.

The protein belongs to the class B bacterial acid phosphatase family. Homotetramer. Requires Mg(2+) as cofactor.

It localises to the periplasm. It catalyses the reaction a phosphate monoester + H2O = an alcohol + phosphate. Its function is as follows. Dephosphorylates several organic phosphate monoesters. Also has a phosphotransferase activity catalyzing the transfer of low-energy phosphate groups from organic phosphate monoesters to free hydroxyl groups of various organic compounds. The polypeptide is Class B acid phosphatase (Aggregatibacter actinomycetemcomitans serotype C (strain D11S-1) (Actinobacillus actinomycetemcomitans)).